Consider the following 229-residue polypeptide: 5'-methylthioadenosine/S-adenosylhomocysteine nucleosidase (229 aa).

E12 (proton acceptor) is an active-site residue. Residues G78, I152, and 173–174 (ME) contribute to the substrate site. The active-site Proton donor is D197.

This sequence belongs to the PNP/UDP phosphorylase family. MtnN subfamily.

It catalyses the reaction S-adenosyl-L-homocysteine + H2O = S-(5-deoxy-D-ribos-5-yl)-L-homocysteine + adenine. The enzyme catalyses S-methyl-5'-thioadenosine + H2O = 5-(methylsulfanyl)-D-ribose + adenine. It carries out the reaction 5'-deoxyadenosine + H2O = 5-deoxy-D-ribose + adenine. Its pathway is amino-acid biosynthesis; L-methionine biosynthesis via salvage pathway; S-methyl-5-thio-alpha-D-ribose 1-phosphate from S-methyl-5'-thioadenosine (hydrolase route): step 1/2. Its function is as follows. Catalyzes the irreversible cleavage of the glycosidic bond in both 5'-methylthioadenosine (MTA) and S-adenosylhomocysteine (SAH/AdoHcy) to adenine and the corresponding thioribose, 5'-methylthioribose and S-ribosylhomocysteine, respectively. Also cleaves 5'-deoxyadenosine, a toxic by-product of radical S-adenosylmethionine (SAM) enzymes, into 5-deoxyribose and adenine. In Haemophilus influenzae (strain PittEE), this protein is 5'-methylthioadenosine/S-adenosylhomocysteine nucleosidase.